A 160-amino-acid chain; its full sequence is Large ribosomal subunit protein uL22c (160 aa).

Belongs to the universal ribosomal protein uL22 family. Part of the 50S ribosomal subunit.

The protein localises to the plastid. It localises to the chloroplast. This protein binds specifically to 23S rRNA. In terms of biological role, the globular domain of the protein is located near the polypeptide exit tunnel on the outside of the subunit, while an extended beta-hairpin is found that lines the wall of the exit tunnel in the center of the 70S ribosome. The sequence is that of Large ribosomal subunit protein uL22c (rpl22) from Arabidopsis thaliana (Mouse-ear cress).